Reading from the N-terminus, the 350-residue chain is Protein SGT1 homolog A (350 aa).

3 TPR repeats span residues Ala2–Cys35, Glu37–Leu69, and Lys71–Glu103. The 90-residue stretch at Thr149–Glu238 folds into the CS domain. An SGS domain is found at Ala260–Ile350.

This sequence belongs to the SGT1 family. Interacts with RAR1. Forms a ternary complex with RAR1 and barley HSP90.

In terms of biological role, functions in R gene-mediated resistance, but participates in a lower extent than SGT1B to RPP5-mediated resistance. Not required for RPM1, RPS2, RPS4 and RPS5-mediated resistance. Probably required for SCF-mediated ubiquitination, by coupling HSP90 to SCF complex for ubiquitination of HSP90 client proteins. This chain is Protein SGT1 homolog A (SGT1A), found in Arabidopsis thaliana (Mouse-ear cress).